We begin with the raw amino-acid sequence, 605 residues long: Pescadillo homolog (605 aa).

The BRCT domain occupies 346–440; sequence PVATLFSEFV…ELVPANLYLP (95 aa). A disordered region spans residues 449 to 553; it reads SPWGDSTGYD…RKATEEEEEK (105 aa). The span at 461 to 508 shows a compositional bias: acidic residues; that stretch reads AENDEDVEGSDAEEIDESADEDAESEEVEEDDTAAVALNEDDEDDEDE. Positions 526 to 537 are enriched in basic and acidic residues; that stretch reads EAKDVIDSESSD. Residues 533–605 adopt a coiled-coil conformation; the sequence is SESSDKKKKK…KAKLAKLDKK (73 aa).

This sequence belongs to the pescadillo family. As to quaternary structure, component of the NOP7 complex, composed of ERB1, NOP7 and YTM1. The complex is held together by ERB1, which interacts with NOP7 via its N-terminal domain and with YTM1 via a high-affinity interaction between the seven-bladed beta-propeller domains of the 2 proteins. The NOP7 complex associates with the 66S pre-ribosome.

The protein resides in the nucleus. It is found in the nucleolus. The protein localises to the nucleoplasm. In terms of biological role, component of the NOP7 complex, which is required for maturation of the 25S and 5.8S ribosomal RNAs and formation of the 60S ribosome. The chain is Pescadillo homolog from Kluyveromyces lactis (strain ATCC 8585 / CBS 2359 / DSM 70799 / NBRC 1267 / NRRL Y-1140 / WM37) (Yeast).